A 288-amino-acid polypeptide reads, in one-letter code: uncharacterized protein (288 aa).

Residues 92–112 (LPTILVILGVIVVIAIVYAII) form a helical membrane-spanning segment. Residues 121–183 (DDHNAASEKA…NDSEKLEIKA (63 aa)) are disordered. 2 stretches are compositionally biased toward basic and acidic residues: residues 136–146 (SKYEIPKDSTL) and 154–181 (SEKE…KLEI). Residues 147–185 (KENQNNSSEKETDTKKETKENEDKKKENDSEKLEIKAAG) adopt a coiled-coil conformation.

Its subcellular location is the cell membrane. This is an uncharacterized protein from Bacillus subtilis (strain 168).